We begin with the raw amino-acid sequence, 484 residues long: Dual specificity protein kinase CLK1 (484 aa).

Positions 1 to 42 are disordered; sequence MRHSKRTYCPDWDDKDWDYGKWRSSSSHKRRKRSHSSAQENK. The span at 26-35 shows a compositional bias: basic residues; it reads SSHKRRKRSH. Position 61 is a phosphoserine (Ser61). The tract at residues 79 to 146 is disordered; that stretch reads DYTQGCEPGH…RTRSVEDDEE (68 aa). Residues 86–97 show a composition bias toward basic and acidic residues; the sequence is PGHRQRDHESRY. Residues 100 to 112 are compositionally biased toward low complexity; it reads HSSKSSGRSGRSS. The span at 113-138 shows a compositional bias: basic residues; that stretch reads YKSKHRIHHSTSHRRSHGKSHRRKRT. At Thr138 the chain carries Phosphothreonine. At Ser140 the chain carries Phosphoserine. In terms of domain architecture, Protein kinase spans 161–477; sequence YEIVDTLGEG…LREALKHPFF (317 aa). ATP is bound by residues 167-175 and Lys191; that span reads LGEGAFGKV. Residue Asp288 is the Proton acceptor of the active site.

This sequence belongs to the protein kinase superfamily. CMGC Ser/Thr protein kinase family. Lammer subfamily. As to quaternary structure, interacts with PPIG and UBL5. Post-translationally, autophosphorylates on all three types of residues. As to expression, endothelial cells.

It localises to the nucleus. It carries out the reaction L-seryl-[protein] + ATP = O-phospho-L-seryl-[protein] + ADP + H(+). The enzyme catalyses L-threonyl-[protein] + ATP = O-phospho-L-threonyl-[protein] + ADP + H(+). It catalyses the reaction L-tyrosyl-[protein] + ATP = O-phospho-L-tyrosyl-[protein] + ADP + H(+). Its activity is regulated as follows. Regulates splicing of its own pre-mRNA according to its kinase activity; increased expression of the catalytically active form influences splicing to generate the catalytically inactive splicing variant lacking the kinase domain. Leucettine L41 inhibits its kinase activity and affects the regulation of alternative splicing mediated by phosphorylation of SR proteins. Dual specificity kinase acting on both serine/threonine and tyrosine-containing substrates. Phosphorylates serine- and arginine-rich (SR) proteins of the spliceosomal complex and may be a constituent of a network of regulatory mechanisms that enable SR proteins to control RNA splicing. Phosphorylates: SRSF1, SRSF3 and PTPN1. Regulates the alternative splicing of tissue factor (F3) pre-mRNA in endothelial cells. This chain is Dual specificity protein kinase CLK1, found in Homo sapiens (Human).